The following is a 601-amino-acid chain: Proline--tRNA ligase (601 aa).

Belongs to the class-II aminoacyl-tRNA synthetase family. ProS type 1 subfamily. In terms of assembly, homodimer.

It localises to the cytoplasm. It catalyses the reaction tRNA(Pro) + L-proline + ATP = L-prolyl-tRNA(Pro) + AMP + diphosphate. Its function is as follows. Catalyzes the attachment of proline to tRNA(Pro) in a two-step reaction: proline is first activated by ATP to form Pro-AMP and then transferred to the acceptor end of tRNA(Pro). As ProRS can inadvertently accommodate and process non-cognate amino acids such as alanine and cysteine, to avoid such errors it has two additional distinct editing activities against alanine. One activity is designated as 'pretransfer' editing and involves the tRNA(Pro)-independent hydrolysis of activated Ala-AMP. The other activity is designated 'posttransfer' editing and involves deacylation of mischarged Ala-tRNA(Pro). The misacylated Cys-tRNA(Pro) is not edited by ProRS. This is Proline--tRNA ligase from Trichodesmium erythraeum (strain IMS101).